Here is a 709-residue protein sequence, read N- to C-terminus: MDQKLSKLVEELTTSGEPRLNPEKMKELKKICKSSEEQLSRAYRLLIAQLTQEHAEIRLSAFQIVEELFVRSHQFRMLVVSNFQEFLELTLGTDPAQPLPPPREAAQRLRQATTRAVEGWNEKFGEAYKKLALGYHFLRHNKKVDFQDTNARSLAERKREEEKQKHLDKIYQERASQAEREMQEMSGEIESCLTEVESCFRLLVPFDFDPNPETESLGMASGMSDALRSSCAGQVGPCRSGTPDPRDGEQPCCSRDLPASAGHPRAGGGAQPSQTATGDPSDEDEDSDLEEFVRSHGLGSHKYTLDVELCSEGLKVQENEDNLALIHAARDTLKLIRNKFLPAVCSWIQRFTRVGTHGGCLKRAIDLKAELELVLRKYKELDIEPEGGERRRTEALGDAEEDEDDEDFVEVPEKEGYEPHIPDHLRPEYGLEAAPEKDTVVRCLRTRTRMDEEVSDPTSAAAQLRQLRDHLPPPSSASPSRALPEPQEAQKLAAERARAPVVPYGVDLHYWGQELPTAGKIVKSDSQHRFWKPSEVEEEVVNADISEMLRSRHITFAGKFEPVQHWCRAPRPDGRLCERQDRLKCPFHGKIVPRDDEGRPLDPEDRAREQRRQLQKQERPEWQDPELMRDVEAATGQDLGSSRYSGKGRGKKRRYPSLTNLKAQADTARARIGRKVFAKAAVRRVVAAMNRMDQKKHEKFSNQFNYALN.

Over residues 1–10 the composition is skewed to basic and acidic residues; that stretch reads MDQKLSKLVE. The tract at residues 1–20 is disordered; the sequence is MDQKLSKLVEELTTSGEPRL. The tract at residues 2–145 is VHS-like; it reads DQKLSKLVEE…HFLRHNKKVD (144 aa). Residues 165–199 adopt a coiled-coil conformation; sequence KHLDKIYQERASQAEREMQEMSGEIESCLTEVESC. Disordered regions lie at residues 230 to 289 and 386 to 406; these read SCAG…DSDL and EGGE…EDDE. A compositionally biased stretch (acidic residues) spans 280–289; sequence PSDEDEDSDL. Phosphoserine occurs at positions 281 and 287. The span at 386–395 shows a compositional bias: basic and acidic residues; the sequence is EGGERRRTEA. A compositionally biased stretch (acidic residues) spans 397 to 406; that stretch reads GDAEEDEDDE. K414 is covalently cross-linked (Glycyl lysine isopeptide (Lys-Gly) (interchain with G-Cter in ubiquitin)). The tract at residues 469–495 is disordered; it reads DHLPPPSSASPSRALPEPQEAQKLAAE. Residues 477–486 are compositionally biased toward low complexity; that stretch reads ASPSRALPEP. The UVSSA-type zinc-finger motif lies at 564-591; that stretch reads QHWCRAPRPDGRLCERQDRLKCPFHGKI. Residues C567, C577, C585, and H588 each coordinate Zn(2+). The interval 588 to 655 is disordered; the sequence is HGKIVPRDDE…GKGRGKKRRY (68 aa). Basic and acidic residues predominate over residues 592–632; sequence VPRDDEGRPLDPEDRAREQRRQLQKQERPEWQDPELMRDVE. Positions 646-655 are enriched in basic residues; it reads GKGRGKKRRY.

The protein belongs to the UVSSA family. As to quaternary structure, interacts with the elongating form of RNA polymerase II (RNA pol IIo) during transcription stress. Interacts with the TFIIH complex during transcription stress. Interacts with ERCC6. Interacts with ERCC8. Interacts with USP7. Post-translationally, monoubiquitinated at Lys-414 in response to transcription stress; this promotes efficient transfer of TFIIH to stalled RNA polymerase II.

The protein localises to the chromosome. Its function is as follows. Factor involved in transcription-coupled nucleotide excision repair (TC-NER), a mechanism that rapidly removes RNA polymerase II-blocking lesions from the transcribed strand of active genes. Acts as a key adapter that promotes recruitment of factors involved in TC-NER. Facilitates the ubiquitination of the elongating form of RNA polymerase II (RNA pol IIo) at DNA damage sites, thereby promoting RNA pol IIo backtracking and access by the TC-NER machinery to lesion sites. Also promotes stabilization of ERCC6/CSB by recruiting deubiquitinating enzyme USP7 to TC-NER complexes, preventing UV-induced degradation of ERCC6 by the proteasome. Mediates the recruitment of the TFIIH complex and other factors that are required for nucleotide excision repair to RNA polymerase II. Also required to inactivate stalled RNA polymerase II by blocking the access of TCEA1/TFIIS, thereby preventing reactivation of RNA polymerase II. Not involved in processing oxidative damage. This is UV-stimulated scaffold protein A from Homo sapiens (Human).